Consider the following 331-residue polypeptide: UPF0194 membrane protein YbhG (331 aa).

Positions 1–15 (MKKPVVIGLAVVVLA) are cleaved as a signal peptide. Positions 107–208 (EEIAQAAAAV…LNLQDSTLIA (102 aa)) form a coiled coil.

This sequence belongs to the UPF0194 family.

It is found in the periplasm. The protein is UPF0194 membrane protein YbhG of Escherichia coli O139:H28 (strain E24377A / ETEC).